Consider the following 1078-residue polypeptide: Disheveled-associated activator of morphogenesis 1 (1078 aa).

Residue Ser34 is modified to Phosphoserine. The GBD/FH3 domain maps to 45–420; that stretch reads LPMPPVEELD…QIVIQNDKGQ (376 aa). A coiled-coil region spans residues 437-526; sequence RMLVNENEVK…ELSRRAVCAS (90 aa). Disordered regions lie at residues 456–480 and 524–585; these read RKEHNELQQKLEKKERECDAKTQEK and CASI…PLGA. The 72-residue stretch at 528 to 599 folds into the FH1 domain; that stretch reads PGGPSPGAPG…PGAPMGLALK (72 aa). 2 stretches are compositionally biased toward pro residues: residues 530-539 and 548-585; these read GPSPGAPGGP and LLPPPPPPPLPGGMLPPPPPPLPPGGPPPPPGPPPLGA. One can recognise an FH2 domain in the interval 600-1009; the sequence is KKSIPQPTNA…EERRARMEAQ (410 aa). Positions 693–702 are actin-binding; it reads AQNCNILLSR. A compositionally biased stretch (basic and acidic residues) spans 987–1027; sequence KQENENMRKKKEEEERRARMEAQLKEQRERERKMRKAKENS. Disordered regions lie at residues 987–1034 and 1055–1078; these read KQEN…GEFD and RNRKRITNQMTDSSRERPITKLNF. A phosphoserine mark is found at Ser1027 and Ser1030. A DAD domain is found at 1027-1058; sequence SEESGEFDDLVSALRSGEVFDKDLSKLKRNRK. Over residues 1067 to 1078 the composition is skewed to basic and acidic residues; it reads SSRERPITKLNF.

This sequence belongs to the formin homology family. As to quaternary structure, homodimer. Interacts with CIP4, FNBP1 and FNBP1L. Interacts with the SH3 domains of Abl, BTK, endophilin, spectrin and SRC. Binds specifically to GTP-bound CDC42 and RHOA. Interacts with INTU; INTU mediates the indirect interaction between DAAM1 and NPHP4. Interacts (via coiled coil domain) with KANK1 (via coiled coil domain). Expressed in all tissues examined.

It localises to the cytoplasm. The protein resides in the cytoskeleton. The protein localises to the cilium basal body. Binds to disheveled (Dvl) and Rho, and mediates Wnt-induced Dvl-Rho complex formation. May play a role as a scaffolding protein to recruit Rho-GDP and Rho-GEF, thereby enhancing Rho-GTP formation. Can direct nucleation and elongation of new actin filaments. Involved in building functional cilia. Involved in the organization of the subapical actin network in multiciliated epithelial cells. Together with DAAM2, required for myocardial maturation and sarcomere assembly. During cell division, may regulate RHOA activation that signals spindle orientation and chromosomal segregation. The chain is Disheveled-associated activator of morphogenesis 1 (DAAM1) from Homo sapiens (Human).